A 172-amino-acid polypeptide reads, in one-letter code: Small t antigen (172 aa).

Methionine 1 bears the N-acetylmethionine; by host mark. Positions glutamate 12–glycine 75 constitute a J domain. The segment at cysteine 101–cysteine 114 adopts a C4-type; atypical zinc-finger fold. The segment at histidine 120–cysteine 141 adopts an H1C3-type; atypical zinc-finger fold.

As to quaternary structure, interacts with host PPP2R1A; the interaction inhibits PP2A activity.

The protein localises to the host cytoplasm. It is found in the host nucleus. In terms of biological role, promotes efficient viral genome replication by accelerating both G1 and S phase progression of the cell cycle. Inhibits host PP2A by binding to the A subunit, thereby displacing lower affinity regulatory B subunit. Inactivation of PP2A in turn results in the transactivation of cyclin A and cyclin D1 promoters. Late during the infection cycle, ST may induce dephosphorylation of host MTOR, leading to the inhibition of cap-dependent translation. May establish and maintain high levels of viral genomes during persistent infection in cell culture. The protein is Small t antigen of Simian virus 12 (strain wt100) (SV-12).